The sequence spans 228 residues: PKHD-type hydroxylase Reut_A2877 (228 aa).

One can recognise a Fe2OG dioxygenase domain in the interval 80 to 180 (IVYPPMFNRY…RVASFFWIQS (101 aa)). Fe cation is bound by residues H98, D100, and H161. R171 serves as a coordination point for 2-oxoglutarate.

Requires Fe(2+) as cofactor. L-ascorbate is required as a cofactor.

The sequence is that of PKHD-type hydroxylase Reut_A2877 from Cupriavidus pinatubonensis (strain JMP 134 / LMG 1197) (Cupriavidus necator (strain JMP 134)).